A 280-amino-acid polypeptide reads, in one-letter code: MSALVLDGKALAAKTEQELSQRVTALKARNGQTPILATILVGDDPASATYVKMKGNACTRIGMESIKVELPSSTTTEELLAKIQELNDNPNVHGILLQHPVPHQIDERLCFDAIAPEKDVDGVTCLGFGRMAMGEEAYGCATPKGIMRLLEAYNIEIAGKHAVVVGRSPILGKPMAMMLLNANATVTICHSRTRNLPDLIKQADIIVGAVGKPEFIKAEWIKDGAVVVDAGYHPGGVGDIELGPLVERAAAYTPVPGGVGPMTINTLIYQSVDSGEKKIR.

Residues 166–168 and Ser-191 contribute to the NADP(+) site; that span reads GRS.

The protein belongs to the tetrahydrofolate dehydrogenase/cyclohydrolase family. As to quaternary structure, homodimer.

It catalyses the reaction (6R)-5,10-methylene-5,6,7,8-tetrahydrofolate + NADP(+) = (6R)-5,10-methenyltetrahydrofolate + NADPH. It carries out the reaction (6R)-5,10-methenyltetrahydrofolate + H2O = (6R)-10-formyltetrahydrofolate + H(+). It participates in one-carbon metabolism; tetrahydrofolate interconversion. Catalyzes the oxidation of 5,10-methylenetetrahydrofolate to 5,10-methenyltetrahydrofolate and then the hydrolysis of 5,10-methenyltetrahydrofolate to 10-formyltetrahydrofolate. This chain is Bifunctional protein FolD, found in Cellvibrio japonicus (strain Ueda107) (Pseudomonas fluorescens subsp. cellulosa).